We begin with the raw amino-acid sequence, 292 residues long: 11-beta-hydroxysteroid dehydrogenase 1 (292 aa).

At 2-7 the chain is on the cytoplasmic side; the sequence is AFMKKY. Residues 8–24 traverse the membrane as a helical; Signal-anchor for type II membrane protein segment; that stretch reads LLPLLGLFLAYYYYSAN. Over 25–292 the chain is Lumenal; the sequence is EEFRPEMLQG…KFDISKLVNN (268 aa). Residues 41–67, 92–93, and 119–121 each bind NADP(+); these read GASK…TARS, TM, and NHI. N-linked (GlcNAc...) asparagine glycans are attached at residues asparagine 123 and asparagine 162. Substrate is bound at residue serine 170. Tyrosine 183 (proton acceptor) is an active-site residue. 183–187 is a binding site for NADP(+); sequence YSASK. Residue asparagine 207 is glycosylated (N-linked (GlcNAc...) asparagine). 218–222 is an NADP(+) binding site; that stretch reads IDTDT.

The protein belongs to the short-chain dehydrogenases/reductases (SDR) family. As to quaternary structure, homodimer. In terms of processing, glycosylated. As to expression, expressed in the eye.

It localises to the endoplasmic reticulum membrane. The protein localises to the microsome membrane. The enzyme catalyses an 11beta-hydroxysteroid + NADP(+) = an 11-oxosteroid + NADPH + H(+). It carries out the reaction corticosterone + NADP(+) = 11-dehydrocorticosterone + NADPH + H(+). The catalysed reaction is cortisone + NADPH + H(+) = cortisol + NADP(+). It catalyses the reaction a 7beta-hydroxysteroid + NADP(+) = a 7-oxosteroid + NADPH + H(+). The enzyme catalyses 7-oxocholesterol + NADPH + H(+) = 7beta-hydroxycholesterol + NADP(+). It carries out the reaction chenodeoxycholate + NADP(+) = 7-oxolithocholate + NADPH + H(+). The catalysed reaction is 7-oxolithocholate + NADPH + H(+) = ursodeoxycholate + NADP(+). It catalyses the reaction glycochenodeoxycholate + NADP(+) = 7-oxoglycolithocholate + NADPH + H(+). The enzyme catalyses taurochenodeoxycholate + NADP(+) = 7-oxotaurolithocholate + NADPH + H(+). It carries out the reaction tauroursodeoxycholate + NADP(+) = 7-oxotaurolithocholate + NADPH + H(+). The catalysed reaction is glycoursodeoxycholate + NADP(+) = 7-oxoglycolithocholate + NADPH + H(+). It catalyses the reaction 7-oxopregnenolone + NADPH + H(+) = 7beta-hydroxypregnenolone + NADP(+). The enzyme catalyses 3beta,7alpha-dihydroxyandrost-5-en-17-one + NADP(+) = 3beta-hydroxy-5-androstene-7,17-dione + NADPH + H(+). It carries out the reaction 3beta-hydroxy-5-androstene-7,17-dione + NADPH + H(+) = 3beta,7beta-dihydroxyandrost-5-en-17-one + NADP(+). The catalysed reaction is 3beta-hydroxy-5alpha-androstane-7,17-dione + NADPH + H(+) = 3beta,7beta-dihydroxy-5alpha-androstan-17-one + NADP(+). It functions in the pathway steroid metabolism. Its function is as follows. Controls the reversible conversion of biologically active glucocorticoids such as cortisone to cortisol, and 11-dehydrocorticosterone to corticosterone in the presence of NADP(H). Participates in the corticosteroid receptor-mediated anti-inflammatory response, as well as metabolic and homeostatic processes. Plays a role in the secretion of aqueous humor in the eye, maintaining a normotensive, intraocular environment. Bidirectional in vitro, predominantly functions as a reductase in vivo, thereby increasing the concentration of active glucocorticoids. It has broad substrate specificity, besides glucocorticoids, it accepts other steroid and sterol substrates. It has broad substrate specificity, besides glucocorticoids, it accepts other steroid and sterol substrates. Interconverts 7-oxo- and 7-hydroxy-neurosteroids such as 7-oxopregnenolone and 7beta-hydroxypregnenolone, 7-oxodehydroepiandrosterone (3beta-hydroxy-5-androstene-7,17-dione) and 7beta-hydroxydehydroepiandrosterone (3beta,7beta-dihydroxyandrost-5-en-17-one), among others. Catalyzes the stereo-specific conversion of the major dietary oxysterol, 7-ketocholesterol (7-oxocholesterol), into the more polar 7-beta-hydroxycholesterol metabolite. 7-oxocholesterol is one of the most important oxysterols, it participates in several events such as induction of apoptosis, accumulation in atherosclerotic lesions, lipid peroxidation, and induction of foam cell formation. Mediates the 7-oxo reduction of 7-oxolithocholate mainly to chenodeoxycholate, and to a lesser extent to ursodeoxycholate, both in its free form and when conjugated to glycine or taurine, providing a link between glucocorticoid activation and bile acid metabolism. Catalyzes the synthesis of 7-beta-25-dihydroxycholesterol from 7-oxo-25-hydroxycholesterol in vitro, which acts as a ligand for the G-protein-coupled receptor (GPCR) Epstein-Barr virus-induced gene 2 (EBI2) and may thereby regulate immune cell migration. The chain is 11-beta-hydroxysteroid dehydrogenase 1 from Oryctolagus cuniculus (Rabbit).